Here is a 376-residue protein sequence, read N- to C-terminus: Probable transcription factor At1g61730 (376 aa).

Positions 1-150 are disordered; the sequence is MTKKLNPLED…RVKKDEESVK (150 aa). A compositionally biased stretch (acidic residues) spans 17 to 40; that stretch reads SDEDDVETSEAGEASDDSSSSEED. A Phosphoserine modification is found at Ser-49. Residues 49–72 show a composition bias toward low complexity; that stretch reads SPSATTAAAPPAKSTAVSTAADSD. The segment covering 73 to 83 has biased composition (acidic residues); it reads SGSETETDSDS. The span at 87–103 shows a compositional bias: polar residues; that stretch reads NPPNSGSGKTIALNTVN.

This sequence belongs to the GeBP family. Interacts with DEK3.

This chain is Probable transcription factor At1g61730, found in Arabidopsis thaliana (Mouse-ear cress).